The chain runs to 277 residues: Large ribosomal subunit protein uL2 (277 aa).

Disordered regions lie at residues 35–58 and 213–277; these read QPLPKRAGRNNQGKLTVRHHGGGH and WKGI…RKRK.

The protein belongs to the universal ribosomal protein uL2 family. In terms of assembly, part of the 50S ribosomal subunit. Forms a bridge to the 30S subunit in the 70S ribosome.

In terms of biological role, one of the primary rRNA binding proteins. Required for association of the 30S and 50S subunits to form the 70S ribosome, for tRNA binding and peptide bond formation. It has been suggested to have peptidyltransferase activity; this is somewhat controversial. Makes several contacts with the 16S rRNA in the 70S ribosome. This is Large ribosomal subunit protein uL2 from Staphylococcus carnosus (strain TM300).